The sequence spans 192 residues: uncharacterized protein (192 aa).

The 132-residue stretch at 29 to 160 (QRQAAVLVPI…PLDIHRRGND (132 aa)) folds into the Nudix hydrolase domain. The short motif at 67 to 89 (GAVDNTDATLIAAALREAQEEVA) is the Nudix box element. The Mg(2+) site is built by Glu-83 and Glu-87.

The protein belongs to the Nudix hydrolase family. PCD1 subfamily. It depends on Mn(2+) as a cofactor. Requires Mg(2+) as cofactor.

Its function is as follows. Probably mediates the hydrolysis of some nucleoside diphosphate derivatives. This is an uncharacterized protein from Klebsiella pneumoniae subsp. pneumoniae (strain ATCC 700721 / MGH 78578).